Consider the following 97-residue polypeptide: Apolipoprotein C-II (97 aa).

The first 22 residues, Met-1 to Gly-22, serve as a signal peptide directing secretion. Residues Ser-63–Met-71 are lipid binding. Residues Ser-75–Glu-97 are lipoprotein lipase cofactor.

This sequence belongs to the apolipoprotein C2 family. In terms of processing, proapolipoprotein C-II is synthesized as a sialic acid containing glycoprotein which is subsequently desialylated prior to its proteolytic processing. Proapolipoprotein C-II, the major form found in plasma undergoes proteolytic cleavage of its N-terminal hexapeptide to generate the mature form apolipoprotein C-II, which occurs as the minor form in plasma.

The protein localises to the secreted. In terms of biological role, component of chylomicrons, very low-density lipoproteins (VLDL), low-density lipoproteins (LDL), and high-density lipoproteins (HDL) in plasma. Plays an important role in lipoprotein metabolism as an activator of lipoprotein lipase. The polypeptide is Apolipoprotein C-II (Apoc2) (Rattus norvegicus (Rat)).